Here is a 417-residue protein sequence, read N- to C-terminus: NADH-quinone oxidoreductase subunit D (417 aa).

It belongs to the complex I 49 kDa subunit family. As to quaternary structure, NDH-1 is composed of 14 different subunits. Subunits NuoB, C, D, E, F, and G constitute the peripheral sector of the complex.

Its subcellular location is the cell inner membrane. The enzyme catalyses a quinone + NADH + 5 H(+)(in) = a quinol + NAD(+) + 4 H(+)(out). Its function is as follows. NDH-1 shuttles electrons from NADH, via FMN and iron-sulfur (Fe-S) centers, to quinones in the respiratory chain. The immediate electron acceptor for the enzyme in this species is believed to be ubiquinone. Couples the redox reaction to proton translocation (for every two electrons transferred, four hydrogen ions are translocated across the cytoplasmic membrane), and thus conserves the redox energy in a proton gradient. The sequence is that of NADH-quinone oxidoreductase subunit D from Francisella tularensis subsp. mediasiatica (strain FSC147).